Consider the following 324-residue polypeptide: Probable pectinesterase A (324 aa).

Residues Met1–Ala19 form the signal peptide. N-linked (GlcNAc...) asparagine glycosylation occurs at Asn27. Gln142 provides a ligand contact to substrate. Catalysis depends on Asp165, which acts as the Proton donor. Asp186 serves as the catalytic Nucleophile. A glycan (N-linked (GlcNAc...) asparagine) is linked at Asn191. 2 residues coordinate substrate: Arg246 and Trp248.

It belongs to the pectinesterase family.

The protein localises to the secreted. It catalyses the reaction [(1-&gt;4)-alpha-D-galacturonosyl methyl ester](n) + n H2O = [(1-&gt;4)-alpha-D-galacturonosyl](n) + n methanol + n H(+). It participates in glycan metabolism; pectin degradation; 2-dehydro-3-deoxy-D-gluconate from pectin: step 1/5. Its function is as follows. Involved in maceration and soft-rotting of plant tissue. The chain is Probable pectinesterase A (pmeA) from Neosartorya fischeri (strain ATCC 1020 / DSM 3700 / CBS 544.65 / FGSC A1164 / JCM 1740 / NRRL 181 / WB 181) (Aspergillus fischerianus).